Consider the following 431-residue polypeptide: Serine hydroxymethyltransferase (431 aa).

(6S)-5,6,7,8-tetrahydrofolate is bound by residues Leu-128 and 132–134 (GHL). Lys-237 is subject to N6-(pyridoxal phosphate)lysine.

The protein belongs to the SHMT family. Homodimer. Pyridoxal 5'-phosphate is required as a cofactor.

It is found in the cytoplasm. It carries out the reaction (6R)-5,10-methylene-5,6,7,8-tetrahydrofolate + glycine + H2O = (6S)-5,6,7,8-tetrahydrofolate + L-serine. The protein operates within one-carbon metabolism; tetrahydrofolate interconversion. Its pathway is amino-acid biosynthesis; glycine biosynthesis; glycine from L-serine: step 1/1. Functionally, catalyzes the reversible interconversion of serine and glycine with tetrahydrofolate (THF) serving as the one-carbon carrier. This reaction serves as the major source of one-carbon groups required for the biosynthesis of purines, thymidylate, methionine, and other important biomolecules. Also exhibits THF-independent aldolase activity toward beta-hydroxyamino acids, producing glycine and aldehydes, via a retro-aldol mechanism. The polypeptide is Serine hydroxymethyltransferase (Ruegeria pomeroyi (strain ATCC 700808 / DSM 15171 / DSS-3) (Silicibacter pomeroyi)).